The chain runs to 243 residues: Small ribosomal subunit protein uS2c (243 aa).

The protein belongs to the universal ribosomal protein uS2 family.

Its subcellular location is the plastid. The protein resides in the chloroplast. This is Small ribosomal subunit protein uS2c (rps2) from Cyanidium caldarium (Red alga).